We begin with the raw amino-acid sequence, 784 residues long: MKKRIPTLLATMIASALYSHQGLAADLASQCMLGVPSYDRPLVKGDTNDLPVTINADNAKGNYPDDAVFTGNVDIMQGNSRLQADEVQLHQKQAEGQPEPVRTVDALGNVHYDDNQVILKGPKGWANLNTKDTNVWEGDYQMVGRQGRGKADLMKQRGENRYTILENGSFTSCLPGSDTWSVVGSEVIHDREEQVAEIWNARFKVGPVPIFYSPYLQLPVGDKRRSGFLIPNAKYTTKNYFEFYLPYYWNIAPNMDATITPHYMHRRGNIMWENEFRYLMQAGAGLMELDYLPSDKVYEDEHPKEGDKHRWLFYWQHSGVMDQVWRFNVDYTKVSDSSYFNDFDSKYGSSTDGYATQKFSVGYAVQNFDATVSTKQFQVFNDQNTSSYSAEPQLDVNYYHNDLGPFDTRIYGQAVHFVNTKDNMPEATRVHLEPTISLPLSNRWGSLNTEAKLMATHYQQTNLDWYNANNSKKLEDSVNRVMPQFKVDGKLIFERDMAMLAPGYTQTLEPRVQYLYVPYRDQSGIYNYDSSLLQSDYNGLFRDRTYGGLDRIASANQVTTGVTTRIYDDAAVERFNVSVGQIYYFTESRTGDDNIKWENDDKTGSLVWAGDTYWRISERWGLRSGVQYDTRLDSVATSSSSLEYRRDQDRLVQLNYRYASPEYIQATLPSYYSTAEQYKNGINQVGAVASWPIADRWSIVGAYYFDTNSSKPADQMLGLQYNSCCYAIRVGYERKLNGWDNDKQHAIYDNAIGFNIELRGLSSNYGLGTQEMLRSNILPYQSSM.

The N-terminal stretch at 1–24 (MKKRIPTLLATMIASALYSHQGLA) is a signal peptide. 2 cysteine pairs are disulfide-bonded: cysteine 31–cysteine 724 and cysteine 173–cysteine 725.

The protein belongs to the LptD family. In terms of assembly, component of the lipopolysaccharide transport and assembly complex. Interacts with LptE and LptA. Contains two intramolecular disulfide bonds.

The protein resides in the cell outer membrane. Its function is as follows. Together with LptE, is involved in the assembly of lipopolysaccharide (LPS) at the surface of the outer membrane. The sequence is that of LPS-assembly protein LptD from Salmonella paratyphi A (strain ATCC 9150 / SARB42).